Here is a 706-residue protein sequence, read N- to C-terminus: Transmembrane and coiled-coil domains protein 2 (706 aa).

2 disordered regions span residues 1–221 (MKRC…TTDT) and 251–280 (VALS…PDPQ). Ser6 is subject to Phosphoserine. A compositionally biased stretch (basic residues) spans 83-94 (GLKHLFHSRRRS). The segment covering 102–112 (SQEAQQQQQQQ) has biased composition (low complexity). Basic and acidic residues predominate over residues 120–131 (PDEKERSPEMHR). Arg163 is subject to Omega-N-methylarginine. Residues 330–365 (KQVFEKKNQKSAQTIAQLHKKLEHYRRRLKEIEQNG) adopt a coiled-coil conformation. A Phosphoserine modification is found at Ser435. The disordered stretch occupies residues 440–459 (AHLKDPMEDGPPEEAARALS). 2 positions are modified to phosphoserine: Ser461 and Ser467. The tract at residues 464-510 (LVSSPKYGSDDECSSASASSAGAGSNSGAGPGGALGSPRSNTLYGAP) is disordered. Over residues 477–487 (SSASASSAGAG) the composition is skewed to low complexity. The span at 488 to 498 (SNSGAGPGGAL) shows a compositional bias: gly residues. Ser500 carries the post-translational modification Phosphoserine. Residues 511-630 (GNLDTLLEEL…QQQQVVQLEG (120 aa)) are a coiled coil. 2 helical membrane passes run 646-666 (VILA…NFIT) and 679-699 (ALLL…TYLL).

This sequence belongs to the TEX28 family. As to quaternary structure, may form homodimers and heterodimers with TMCC2 or TMCC3 via the coiled-coil domains. Interacts with ribosomal proteins RPL4 and RPS6. Interacts with APOE and proteolytic processed C-terminal fragment C99 of the amyloid precursor protein (APP C99).

It localises to the endoplasmic reticulum membrane. Its function is as follows. May be involved in the regulation of the proteolytic processing of the amyloid precursor protein (APP) possibly also implicating APOE. The protein is Transmembrane and coiled-coil domains protein 2 of Mus musculus (Mouse).